The sequence spans 490 residues: Probable cytosol aminopeptidase (490 aa).

The Mn(2+) site is built by K260 and D265. K272 is a catalytic residue. Residues D284, D343, and E345 each coordinate Mn(2+). R347 is a catalytic residue.

The protein belongs to the peptidase M17 family. It depends on Mn(2+) as a cofactor.

The protein localises to the cytoplasm. The catalysed reaction is Release of an N-terminal amino acid, Xaa-|-Yaa-, in which Xaa is preferably Leu, but may be other amino acids including Pro although not Arg or Lys, and Yaa may be Pro. Amino acid amides and methyl esters are also readily hydrolyzed, but rates on arylamides are exceedingly low.. It carries out the reaction Release of an N-terminal amino acid, preferentially leucine, but not glutamic or aspartic acids.. Functionally, presumably involved in the processing and regular turnover of intracellular proteins. Catalyzes the removal of unsubstituted N-terminal amino acids from various peptides. The protein is Probable cytosol aminopeptidase of Gloeothece citriformis (strain PCC 7424) (Cyanothece sp. (strain PCC 7424)).